The chain runs to 55 residues: MAKGIRDKIKLVSSAGTGHFYTTTKNKRTMPEKLEMKKFDPVVRQHVMYKEAKIK.

This sequence belongs to the bacterial ribosomal protein bL33 family.

This Photorhabdus laumondii subsp. laumondii (strain DSM 15139 / CIP 105565 / TT01) (Photorhabdus luminescens subsp. laumondii) protein is Large ribosomal subunit protein bL33.